The chain runs to 59 residues: MAVQQNKKSKSKKGMRRSHDRVAVPTIVYCACGEPTVPHRACPSCGTYKGRQVVAQPNE.

Residues 1-20 (MAVQQNKKSKSKKGMRRSHD) form a disordered region. Over residues 7–19 (KKSKSKKGMRRSH) the composition is skewed to basic residues.

Belongs to the bacterial ribosomal protein bL32 family.

This chain is Large ribosomal subunit protein bL32, found in Nitratidesulfovibrio vulgaris (strain DSM 19637 / Miyazaki F) (Desulfovibrio vulgaris).